We begin with the raw amino-acid sequence, 336 residues long: MSWNLLFVLLIGFVVLILLSPVFKSTWPFSTFYRNVFQPFLVDDQKYRWKLHLVPLFYTSIYLYLVYTYHMRVESTIKNELFLLERILIVPIIILPPVALGILAMVSRAEDSKDHKSGSTEEYPYDYLLYYPAIKCSTCRIVKPARSKHCSICNRCVLVADHHCIWINNCIGKGNYLQFYLFLISNIFSMCYAFLRLWYISLNSTSTLPRAVLTLTILCGCFTIICAIFTYLQLAIVKEGMTTNEQDKWYTIQEYMREGKLVRSLDDDCPSWFFKCTEQKDDAAEPLQDQHVTFYSTNAYDHKHYNLTHYITIKDASEIPNIYDKGTFLANLTDLI.

Topologically, residues 1 to 2 (MS) are lumenal. A helical membrane pass occupies residues 3–23 (WNLLFVLLIGFVVLILLSPVF). Topologically, residues 24–50 (KSTWPFSTFYRNVFQPFLVDDQKYRWK) are cytoplasmic. Residues 51-71 (LHLVPLFYTSIYLYLVYTYHM) form a helical membrane-spanning segment. Topologically, residues 72–86 (RVESTIKNELFLLER) are lumenal. Residues 87 to 107 (ILIVPIIILPPVALGILAMVS) traverse the membrane as a helical segment. The Cytoplasmic segment spans residues 108-179 (RAEDSKDHKS…CIGKGNYLQF (72 aa)). One can recognise a DHHC domain in the interval 134 to 184 (IKCSTCRIVKPARSKHCSICNRCVLVADHHCIWINNCIGKGNYLQFYLFLI). Residues 180 to 200 (YLFLISNIFSMCYAFLRLWYI) traverse the membrane as a helical segment. The Lumenal portion of the chain corresponds to 201–216 (SLNSTSTLPRAVLTLT). A helical membrane pass occupies residues 217–237 (ILCGCFTIICAIFTYLQLAIV). Residues 238–336 (KEGMTTNEQD…TFLANLTDLI (99 aa)) are Cytoplasmic-facing.

This sequence belongs to the DHHC palmitoyltransferase family. SWF1 subfamily.

The protein localises to the endoplasmic reticulum membrane. It carries out the reaction L-cysteinyl-[protein] + hexadecanoyl-CoA = S-hexadecanoyl-L-cysteinyl-[protein] + CoA. Palmitoyltransferase that targets several endosomal SNAREs. Palmitoylates the SNAREs SNC1, SNC2, SYN8 and TLG1, at cysteine residues close to the cytoplasmic end of their transmembrane domain. May have a role in the cellular quality control of transmembrane domain-containing proteins. This is Palmitoyltransferase SWF1 (SWF1) from Saccharomyces cerevisiae (strain ATCC 204508 / S288c) (Baker's yeast).